Consider the following 443-residue polypeptide: MRLSRYFLPILRETPKEAEIVSHRLMLRAGMIRQEAAGIYAWLPLGLRVLNRVTEVIRAEQDRSGAIELLMPTIQSAELWRESGRYEAYGKEMLRIRDRHEREMLFGPTNEEMITAIFRSAVRSYKDLPKNLYHIQWKFRDEVRPRFGTMRSREFLMKDAYSFDLDEAGARHAYNKMFVAYLRTFARLGLKAIPMRAETGPIGGNLSHEFIILAQTGESEVFCDRAYLGFPIPPASIDFDDVAALQATVDHWTSRYAATSEMHEPAAFEAVPEEARMAARGIEVGHIFYFGTKYSEPMGARVTGPDGQERPVHMGSYGIGPSRLVAAIIEASHDEAGIVWPDSVAPFDVALLNLKVGDAATDAACAKLQEELEAAGLTVLTDDRDERPGAKFATADLIGLPWQVIVGPKGLAEGTIELKRRATGEREIVAVDAVAPRLRGAKE.

Belongs to the class-II aminoacyl-tRNA synthetase family. ProS type 2 subfamily. In terms of assembly, homodimer.

Its subcellular location is the cytoplasm. The enzyme catalyses tRNA(Pro) + L-proline + ATP = L-prolyl-tRNA(Pro) + AMP + diphosphate. In terms of biological role, catalyzes the attachment of proline to tRNA(Pro) in a two-step reaction: proline is first activated by ATP to form Pro-AMP and then transferred to the acceptor end of tRNA(Pro). The polypeptide is Proline--tRNA ligase (Methylobacterium nodulans (strain LMG 21967 / CNCM I-2342 / ORS 2060)).